The following is a 232-amino-acid chain: Ion-translocating oxidoreductase complex subunit E (232 aa).

5 consecutive transmembrane segments (helical) span residues 39–59 (LGLGLATTLVLTLTNLTISSL), 69–89 (IPIYVMIIASVVSVVQMLINA), 92–112 (FGLYQSLGIFIPLIVTNCIVV), 125–145 (ALSALDGFSIGMGATCAMFVL), and 182–202 (PFLLAMLPPGAFIGLGMMLAV).

The protein belongs to the NqrDE/RnfAE family. The complex is composed of six subunits: RnfA, RnfB, RnfC, RnfD, RnfE and RnfG.

It localises to the cell inner membrane. Functionally, part of a membrane-bound complex that couples electron transfer with translocation of ions across the membrane. The sequence is that of Ion-translocating oxidoreductase complex subunit E from Klebsiella pneumoniae (strain 342).